The primary structure comprises 323 residues: tRNA U34 carboxymethyltransferase (323 aa).

Carboxy-S-adenosyl-L-methionine is bound by residues Lys-91, Trp-105, Lys-110, Gly-130, Asp-152–Thr-154, Ile-181–Glu-182, Met-196, Tyr-200, and Arg-315.

It belongs to the class I-like SAM-binding methyltransferase superfamily. CmoB family. Homotetramer.

It catalyses the reaction carboxy-S-adenosyl-L-methionine + 5-hydroxyuridine(34) in tRNA = 5-carboxymethoxyuridine(34) in tRNA + S-adenosyl-L-homocysteine + H(+). Catalyzes carboxymethyl transfer from carboxy-S-adenosyl-L-methionine (Cx-SAM) to 5-hydroxyuridine (ho5U) to form 5-carboxymethoxyuridine (cmo5U) at position 34 in tRNAs. The sequence is that of tRNA U34 carboxymethyltransferase from Escherichia coli (strain K12 / MC4100 / BW2952).